The chain runs to 176 residues: Peptide methionine sulfoxide reductase MsrA (176 aa).

The active site involves C14.

Belongs to the MsrA Met sulfoxide reductase family.

The catalysed reaction is L-methionyl-[protein] + [thioredoxin]-disulfide + H2O = L-methionyl-(S)-S-oxide-[protein] + [thioredoxin]-dithiol. The enzyme catalyses [thioredoxin]-disulfide + L-methionine + H2O = L-methionine (S)-S-oxide + [thioredoxin]-dithiol. Functionally, has an important function as a repair enzyme for proteins that have been inactivated by oxidation. Catalyzes the reversible oxidation-reduction of methionine sulfoxide in proteins to methionine. The chain is Peptide methionine sulfoxide reductase MsrA from Halalkalibacterium halodurans (strain ATCC BAA-125 / DSM 18197 / FERM 7344 / JCM 9153 / C-125) (Bacillus halodurans).